We begin with the raw amino-acid sequence, 576 residues long: Septation ring formation regulator EzrA (576 aa).

The Extracellular segment spans residues 1-7 (MSSTVII). A helical transmembrane segment spans residues 8 to 26 (LIVVLLVILVAFYAFAILM). Topologically, residues 27 to 576 (RKKTEDRILA…FKNKPTPDYL (550 aa)) are cytoplasmic. Coiled-coil stretches lie at residues 105–134 (RARESVADSEAQIELMEGDVEGIRQGVAQL) and 277–301 (EQFELDRVEAELGLIQEKVEELYAI).

This sequence belongs to the EzrA family.

Its subcellular location is the cell membrane. Negative regulator of FtsZ ring formation; modulates the frequency and position of FtsZ ring formation. Inhibits FtsZ ring formation at polar sites. Interacts either with FtsZ or with one of its binding partners to promote depolymerization. The sequence is that of Septation ring formation regulator EzrA from Lactococcus lactis subsp. lactis (strain IL1403) (Streptococcus lactis).